We begin with the raw amino-acid sequence, 348 residues long: Selenide, water dikinase (348 aa).

The active site involves Cys17. ATP contacts are provided by residues Lys20 and 48–50 (TRD). Position 51 (Asp51) interacts with Mg(2+). ATP is bound by residues Asp68, Asp91, and 139-141 (GHS). Asp91 contributes to the Mg(2+) binding site. Residue Asp227 participates in Mg(2+) binding.

This sequence belongs to the selenophosphate synthase 1 family. Class I subfamily. In terms of assembly, homodimer. Mg(2+) serves as cofactor.

It catalyses the reaction hydrogenselenide + ATP + H2O = selenophosphate + AMP + phosphate + 2 H(+). In terms of biological role, synthesizes selenophosphate from selenide and ATP. This chain is Selenide, water dikinase, found in Yersinia pestis.